The sequence spans 384 residues: S-adenosylmethionine synthase (384 aa).

His15 lines the ATP pocket. Asp17 lines the Mg(2+) pocket. A K(+)-binding site is contributed by Glu43. Residues Glu56 and Gln99 each contribute to the L-methionine site. A flexible loop region spans residues 99–109; sequence QSPDINQGVDR. Residues 164-166, 230-231, Asp239, 245-246, Ala262, and Lys266 each bind ATP; these read DAK, RF, and RK. Position 239 (Asp239) interacts with L-methionine. L-methionine is bound at residue Lys270.

Belongs to the AdoMet synthase family. Homotetramer; dimer of dimers. The cofactor is Mg(2+). It depends on K(+) as a cofactor.

Its subcellular location is the cytoplasm. It carries out the reaction L-methionine + ATP + H2O = S-adenosyl-L-methionine + phosphate + diphosphate. Its pathway is amino-acid biosynthesis; S-adenosyl-L-methionine biosynthesis; S-adenosyl-L-methionine from L-methionine: step 1/1. In terms of biological role, catalyzes the formation of S-adenosylmethionine (AdoMet) from methionine and ATP. The overall synthetic reaction is composed of two sequential steps, AdoMet formation and the subsequent tripolyphosphate hydrolysis which occurs prior to release of AdoMet from the enzyme. The polypeptide is S-adenosylmethionine synthase (Serratia proteamaculans (strain 568)).